We begin with the raw amino-acid sequence, 264 residues long: S-adenosylmethionine decarboxylase proenzyme (264 aa).

The active-site Schiff-base intermediate with substrate; via pyruvic acid is the Ser112. Ser112 bears the Pyruvic acid (Ser); by autocatalysis mark. The Proton acceptor; for processing activity role is filled by His117. The Proton donor; for catalytic activity role is filled by Cys140.

This sequence belongs to the prokaryotic AdoMetDC family. Type 2 subfamily. As to quaternary structure, heterooctamer of four alpha and four beta chains arranged as a tetramer of alpha/beta heterodimers. The cofactor is pyruvate. Post-translationally, is synthesized initially as an inactive proenzyme. Formation of the active enzyme involves a self-maturation process in which the active site pyruvoyl group is generated from an internal serine residue via an autocatalytic post-translational modification. Two non-identical subunits are generated from the proenzyme in this reaction, and the pyruvate is formed at the N-terminus of the alpha chain, which is derived from the carboxyl end of the proenzyme. The post-translation cleavage follows an unusual pathway, termed non-hydrolytic serinolysis, in which the side chain hydroxyl group of the serine supplies its oxygen atom to form the C-terminus of the beta chain, while the remainder of the serine residue undergoes an oxidative deamination to produce ammonia and the pyruvoyl group blocking the N-terminus of the alpha chain.

The catalysed reaction is S-adenosyl-L-methionine + H(+) = S-adenosyl 3-(methylsulfanyl)propylamine + CO2. It functions in the pathway amine and polyamine biosynthesis; S-adenosylmethioninamine biosynthesis; S-adenosylmethioninamine from S-adenosyl-L-methionine: step 1/1. Catalyzes the decarboxylation of S-adenosylmethionine to S-adenosylmethioninamine (dcAdoMet), the propylamine donor required for the synthesis of the polyamines spermine and spermidine from the diamine putrescine. This is S-adenosylmethionine decarboxylase proenzyme from Salmonella dublin (strain CT_02021853).